We begin with the raw amino-acid sequence, 72 residues long: Defensin-like protein 230 (72 aa).

Positions 1-27 (MEKKSLACLSFLLLVLFVAQEIVVSEA) are cleaved as a signal peptide. 4 disulfides stabilise this stretch: cysteine 30–cysteine 72, cysteine 41–cysteine 60, cysteine 45–cysteine 66, and cysteine 49–cysteine 68.

It belongs to the DEFL family.

The protein resides in the secreted. The polypeptide is Defensin-like protein 230 (PI230) (Pisum sativum (Garden pea)).